We begin with the raw amino-acid sequence, 4493 residues long: Mucin-17 (4493 aa).

An N-terminal signal peptide occupies residues 1–25 (MPRPGTMALCLLTLVLSLLPPQAAA). Residues 26-4393 (EQDLSVNRAV…QGTQKSLVYG (4368 aa)) are Extracellular-facing. Over residues 88–105 (NPEMTSIESSVTSDTPGV) the composition is skewed to polar residues. Disordered regions lie at residues 88-159 (NPEM…SISS), 188-223 (LTTS…SMPA), 248-277 (TISA…STPL), and 306-344 (VITS…ASTM). A compositionally biased stretch (low complexity) spans 106 to 146 (SSTRMTPTESRTTSESTSDSTTLFPSSTEDTSSPTTPEGTD). Over residues 148–159 (PMSTPSEESISS) the composition is skewed to polar residues. Tandem repeats lie at residues 185 to 245 (STPL…EIST), 246 to 300 (PVTI…TTPA), 301 to 361 (ATNI…PVDT), 362 to 418 (STLV…TIPV), 420 to 477 (SKTF…TTPV), 479 to 538 (SKTQ…PVDT), 539 to 597 (STPV…PADS), 598 to 654 (NTFV…TTPV), 656 to 715 (SNTP…PVDT), 716 to 774 (STPV…PLDT), 775 to 831 (STHI…TTPV), 833 to 892 (SNSP…PVDT), 893 to 951 (STPV…PVDT), 952 to 1010 (STPV…PVDS), 1011 to 1069 (NTPL…PADT), 1070 to 1121 (STPV…ASTL), 1122 to 1187 (STTP…PVDS), 1188 to 1246 (KTQV…PVDT), 1247 to 1305 (STPV…PVDT), 1306 to 1364 (KGPV…PVDN), 1365 to 1423 (STPV…PVDT), 1424 to 1482 (STPG…PVDS), 1483 to 1541 (NSPV…PAVT), 1542 to 1600 (STPV…PIDS), 1601 to 1656 (KTQV…TTPV), 1658 to 1717 (SNSP…PVDN), 1718 to 1776 (STPV…PIDT), 1777 to 1835 (STPV…PVDS), 1836 to 1895 (NSPV…AVTS), 1896 to 1951 (TPVT…TTLA), 1953 to 2012 (TRTP…PVDT), 2013 to 2071 (STPA…PVDS), 2072 to 2127 (KTQV…TTPV), 2129 to 2188 (SNSP…PVDT), 2189 to 2247 (STPV…PVDT), 2248 to 2306 (STPV…PVDS), 2307 to 2365 (NTPF…PADT), 2366 to 2424 (STPV…PVDT), 2425 to 2483 (STPV…PVDT), 2484 to 2540 (STPM…TTPV), 2542 to 2601 (SNSP…PVDT), 2602 to 2653 (SIPV…ASTL), 2654 to 2719 (STTP…PVDT), 2720 to 2770 (STPV…EAST), 2772 to 2837 (STTA…PVDT), 2838 to 2896 (STPV…PVDT), 2897 to 2955 (SIPV…PVDT), 2956 to 3014 (RTPV…PADT), 3015 to 3073 (STPV…PVDS), 3074 to 3132 (NSPV…PVDT), 3133 to 3191 (STPV…PVDT), 3192 to 3247 (STPV…TTPV), 3249 to 3308 (SNTP…PADT), 3309 to 3367 (STPV…PVDT), 3368 to 3426 (STPV…PVDS), 3427 to 3485 (NTLV…PVDT), and 3486 to 3544 (STPV…PVDS). Residues 185–3727 (STPLTTSTQA…SVVTSTPVTT (3543 aa)) are 59 X approximate tandem repeats. Over residues 188-210 (LTTSTQASSSPTTPESTTIPKST) the composition is skewed to low complexity. Positions 211–223 (NSEGSTPLTSMPA) are enriched in polar residues. Positions 308 to 323 (TSTEASSSPTTAEGTS) are enriched in low complexity. A compositionally biased stretch (polar residues) spans 324 to 344 (IPTSTYTEGSTPLTSTPASTM). Residues 425–441 (TTASEASSSPTTAEDTS) are compositionally biased toward low complexity. Disordered stretches follow at residues 425 to 629 (TTAS…ERGT), 644 to 868 (SEAS…TPLT), 886 to 1104 (STTP…TPLT), 1116 to 1163 (SEAS…TPLA), 1175 to 1279 (SEAN…GSTL), and 1296 to 1338 (STLL…GRTP). Residues 442–483 (IATSTPSEGSTPLTSMPVSTTPVASSEASNLSTTPVDSKTQV) are compositionally biased toward polar residues. Residue Asn-471 is glycosylated (N-linked (GlcNAc...) asparagine). The segment covering 484–497 (TTSTEASSSPPTAE) has biased composition (low complexity). The span at 498 to 528 (VNSMPTSTPSEGSTPLTSMSVSTMPVASSEA) shows a compositional bias: polar residues. Composition is skewed to low complexity over residues 529-573 (STLS…TPLT) and 584-618 (SSEA…EGTS). Composition is skewed to polar residues over residues 619-629 (MPTSTYSERGT) and 644-660 (SEAS…NTPV). Low complexity predominate over residues 661–677 (TTSTEATSSSTTAEGTS). Residues 678-705 (MPTSTYTEGSTPLTSMPVNTTLVASSEA) show a composition bias toward polar residues. Asn-696 carries N-linked (GlcNAc...) asparagine glycosylation. The segment covering 706–733 (STLSTTPVDTSTPVTTSTEASSSPTTAD) has biased composition (low complexity). Over residues 737-754 (MPTSTPSEGSTPLTSMPV) the composition is skewed to polar residues. A compositionally biased stretch (low complexity) spans 755-776 (SKTLLTSSEASTLSTTPLDTST). Residues 777-832 (HITTSTEASCSPTTTEGTSMPISTPSEGSPLLTSIPVSITPVTSPEASTLSTTPVD) show a composition bias toward polar residues. The span at 833–849 (SNSPVTTSTEVSSSPTP) shows a compositional bias: low complexity. Residues 854-868 (SMPTSTYSEGRTPLT) are compositionally biased toward polar residues. Positions 886–900 (STTPVDTSTPVTNST) are enriched in low complexity. Asn-898 carries N-linked (GlcNAc...) asparagine glycosylation. Residues 901–944 (EARSSPTTSEGTSMPTSTPGEGSTPLTSMPDSTTPVVSSEARTL) show a composition bias toward polar residues. Residues 945–972 (SATPVDTSTPVTTSTEATSSPTTAEGTS) are compositionally biased toward low complexity. Over residues 973–1011 (IPTSTPSEGTTPLTSTPVSHTLVANSEASTLSTTPVDSN) the composition is skewed to polar residues. Positions 1012–1021 (TPLTTSTEAS) are enriched in low complexity. A compositionally biased stretch (polar residues) spans 1029–1062 (GTSMPTSTPSEGSTPLTRMPVSTTMVASSETSTL). Over residues 1063–1090 (STTPADTSTPVTTYSQASSSSTTADGTS) the composition is skewed to low complexity. Polar residues-rich tracts occupy residues 1091–1104 (MPTS…TPLT) and 1116–1132 (SEAS…SIPV). The span at 1133–1149 (TTSTEASSSPTTAEGTS) shows a compositional bias: low complexity. Composition is skewed to polar residues over residues 1175–1198 (SEAN…TEAS) and 1205–1222 (EVTS…TPLT). Low complexity predominate over residues 1237–1279 (STLSTSPVDTSTPVTTSAETSSSPTTAEGTSLPTSTTSEGSTL). 2 stretches are compositionally biased toward polar residues: residues 1310–1320 (VTSNEVSSSPT) and 1326–1338 (SMPT…GRTP). Asn-1345 carries N-linked (GlcNAc...) asparagine glycosylation. Polar residues predominate over residues 1360–1394 (TPVDNSTPVTTSTEACSSPTTSEGTSMPNSNPSEG). Disordered stretches follow at residues 1360-1516 (TPVD…STAL), 1537-1575 (TPAV…STPL), 1590-1930 (ANTL…PLTS), 1947-2163 (STTL…RTPL), 2177-2281 (AIST…TTPL), 2295-2501 (EVST…TTAE), 2524-2630 (TTPV…TPSE), 2647-2693 (SSEA…RSTP), 2709-2751 (ASTL…DGST), 2765-2853 (SSEA…SPTT), 2879-2925 (TPVA…TPSE), 2942-3167 (GSEA…TPLT), 3182-3577 (STLS…GSSS), 3589-3635 (TSSE…EVST), 3667-3701 (ITST…TMPV), 3785-3812 (MTTA…TSER), 3829-3849 (PSEA…LLTS), 3892-3914 (ASIA…DTAS), 3965-3988 (VITS…FSTT), and 4008-4129 (STAP…TPTV). Low complexity-rich tracts occupy residues 1395 to 1415 (TTPL…EAST) and 1423 to 1442 (TSTP…TAEG). Positions 1461-1483 (PVSNTPVANSEASTLSTTPVDSN) are enriched in polar residues. Over residues 1484-1499 (SPVVTSTAVSSSPTPA) the composition is skewed to low complexity. Over residues 1504 to 1516 (IAISTPSEGSTAL) the composition is skewed to polar residues. Residues 1537 to 1547 (TPAVTSTPVTT) show a composition bias toward low complexity. Composition is skewed to polar residues over residues 1548–1575 (YSQA…STPL) and 1590–1604 (ANTL…KTQV). The span at 1605-1620 (TASTEASSSTTAEGSS) shows a compositional bias: low complexity. Composition is skewed to polar residues over residues 1621–1673 (MTIS…SSPT) and 1679–1775 (SMPT…TPID). The span at 1776–1797 (TSTPVTTSTEATSSPTTAEGTS) shows a compositional bias: low complexity. Polar residues predominate over residues 1798-1836 (IPTSTLSEGMTPLTSTPVSHTLVANSEASTLSTTPVDSN). Over residues 1837–1852 (SPVVTSTAVSSSPTPA) the composition is skewed to low complexity. The span at 1856–1883 (SIATSTPSEGSTALTSIPVSTTTVASSE) shows a compositional bias: polar residues. A compositionally biased stretch (low complexity) spans 1884–1900 (TNTLSTTPAVTSTPVTT). Polar residues-rich tracts occupy residues 1901–1921 (YAQV…TSTP) and 1947–1976 (STTL…TSMP). Positions 1984-2033 (STPLTSMPLSTTLVVSSEASTLSTTPVDTSTPATTSTEGSSSPTTAGGTS) are enriched in low complexity. 2 stretches are compositionally biased toward polar residues: residues 2034 to 2043 (IQTSTPSERT) and 2051 to 2077 (VSTT…QVTN). N-linked (GlcNAc...) asparagine glycosylation occurs at Asn-2077. Low complexity predominate over residues 2078–2091 (STEASSSATAEGSS). The segment covering 2092–2156 (MTISAPSEGS…EGTSMQTSTY (65 aa)) has biased composition (polar residues). A compositionally biased stretch (low complexity) spans 2177–2196 (AISTLSTTPVDTSTPVTNST). N-linked (GlcNAc...) asparagine glycosylation is present at Asn-2194. The span at 2197–2240 (EARSSPTTSEGTSMPTSTPSEGSTPFTSMPVSTMPVVTSEASTL) shows a compositional bias: polar residues. Over residues 2241–2268 (SATPVDTSTPVTTSTEATSSPTTAEGTS) the composition is skewed to low complexity. Polar residues-rich tracts occupy residues 2269–2281 (IPTS…TTPL) and 2295–2307 (EVST…VDSN). Residues 2308-2317 (TPFTTSTEAS) are compositionally biased toward low complexity. Over residues 2325 to 2358 (GTSMPTSTSSEGNTPLTRMPVSTTMVASFETSTL) the composition is skewed to polar residues. The segment covering 2359-2371 (STTPADTSTPVTT) has biased composition (low complexity). Positions 2372 to 2395 (YSQAGSSPTTADDTSMPTSTYSEG) are enriched in polar residues. Composition is skewed to low complexity over residues 2396–2445 (STPL…EGTS) and 2462–2499 (PVST…SPTT). Residues 2524–2547 (TTPVASPEASTLSTTPVDSNSPVV) show a composition bias toward polar residues. Positions 2548-2563 (TSTEISSSATSAEGTS) are enriched in low complexity. A compositionally biased stretch (polar residues) spans 2564 to 2576 (MPTSTYSEGSTPL). The segment covering 2586-2617 (LASSEASTLSTTPVDTSIPVTTSTETSSSPTT) has biased composition (low complexity). Over residues 2618–2628 (AKDTSMPISTP) the composition is skewed to polar residues. Residues 2654-2681 (STTPVDTRTLVTTSTGTSSSPTTAEGSS) show a composition bias toward low complexity. The span at 2682–2693 (MPTSTPGERSTP) shows a compositional bias: polar residues. Residues 2710–2740 (STLSTTPVDTSTPVTTSAEASSSPTTAEGTS) show a composition bias toward low complexity. Positions 2741-2751 (MRISTPSDGST) are enriched in polar residues. Low complexity-rich tracts occupy residues 2765 to 2816 (SSEA…TSMP) and 2829 to 2853 (TLST…SPTT). Residues 2879–2900 (TPVASSEASTLSTTPVDTSIPV) show a composition bias toward polar residues. Composition is skewed to low complexity over residues 2901–2917 (TTST…EGTS) and 2950–2976 (TTPV…EGTS). A compositionally biased stretch (polar residues) spans 2988 to 3009 (PLTSMSVSTMPVASSEASTLSR). Residues 3010–3031 (TPADTSTPVTTSTEASSSPTTA) show a composition bias toward low complexity. Over residues 3037–3057 (PISTPSEGSTPLTSIPVSTTP) the composition is skewed to polar residues. Low complexity-rich tracts occupy residues 3073-3089 (SNSP…SPTP) and 3104-3140 (STPL…TTST). Residues 3141–3166 (EAHSSPTTSEGTSMPTSTPSEGSTPL) are compositionally biased toward polar residues. The segment covering 3185–3211 (SATPVDTSTPVTTSTEATSSTTAEGTS) has biased composition (low complexity). The segment covering 3212 to 3253 (IPTSTPSEGMTPLTSVPVSNTPVASSEASILSTTPVDSNTPL) has biased composition (polar residues). Positions 3254 to 3267 (TTSTEASSSPPTAE) are enriched in low complexity. The segment covering 3268 to 3288 (GTSMPTSTPSEGSTPLTSMPV) has biased composition (polar residues). A compositionally biased stretch (low complexity) spans 3289–3314 (STTTVASSETSTLSTTPADTSTPVTT). A compositionally biased stretch (polar residues) spans 3329-3357 (SMPTSTYSEGSTPLTNMSFSTTPVVSSEA). N-linked (GlcNAc...) asparagine glycosylation occurs at Asn-3344. Positions 3358-3375 (STLSTTPVDTSTPVTTST) are enriched in low complexity. The segment covering 3376–3401 (EASLSPTTAEGTSIPTSSPSEGTTPL) has biased composition (polar residues). A compositionally biased stretch (low complexity) spans 3405–3414 (PVSTTPVVSS). Composition is skewed to polar residues over residues 3415 to 3441 (EVNT…SSPT) and 3447 to 3475 (SLPT…SSEA). Positions 3476 to 3501 (STLSTTPVDTSTPVTTSSPTNSSPTT) are enriched in low complexity. 2 stretches are compositionally biased toward polar residues: residues 3502–3549 (AEVT…TFVT) and 3558–3571 (PATL…MSTP). The segment covering 3589–3616 (TSSEASTPSTPSVDRSTPVTTSTQSNST) has biased composition (low complexity). A run of 2 repeats spans residues 3604 to 3662 (STPV…PVDT) and 3663 to 3727 (STPV…PVTT). Positions 3626-3635 (PMSTPSEVST) are enriched in polar residues. The span at 3667–3679 (ITSTQVSSSPVTP) shows a compositional bias: low complexity. Composition is skewed to polar residues over residues 3690–3701 (SEGSTPLTTMPV) and 3785–3806 (MTTA…TMPM). Composition is skewed to low complexity over residues 3967-3988 (TSTE…FSTT), 4008-4083 (STAP…SSTT), and 4090-4129 (TTMT…TPTV). Asn-4116 carries an N-linked (GlcNAc...) asparagine glycan. In terms of domain architecture, EGF-like spans 4131–4170 (RTTTCFGDGCQNTASRCKNGGTWDGLKCQCPNLYYGELCE). 3 cysteine pairs are disulfide-bonded: Cys-4135–Cys-4147, Cys-4140–Cys-4158, and Cys-4160–Cys-4169. In terms of domain architecture, SEA spans 4184–4291 (ISAQMELTVT…QQIMINDICS (108 aa)). 5 N-linked (GlcNAc...) asparagine glycosylation sites follow: Asn-4205, Asn-4236, Asn-4267, Asn-4297, and Asn-4305. The helical transmembrane segment at 4394-4414 (LVGAGVVLMLIILVALLMLVF) threads the bilayer. The Cytoplasmic segment spans residues 4415 to 4493 (RSKREVKRQK…QRPQVMTTSF (79 aa)).

As to quaternary structure, interacts via its C-terminus with PDZK1 and this interaction appears important for proper localization. Probably cleaved within the SEA domain. Post-translationally, N-glycosylated. Contains high mannose and complex-type glycans. The forms containing the complex type glycans localize to the cell surface. Not O-glycosylated. As to expression, expressed almost exclusively in the intestine. Expression is especially high in both the duodenum and transverse colon. Expressed in mature absorptive cells of the small intestinal villi. No expression is detected in goblet cells. Highly expressed in pancreatic adenocarcinoma tissue (at protein level). Expression is not detectable in normal pancreas, in pancreatitis or in cell lines derived from other cancers.

The protein resides in the cell membrane. It localises to the secreted. In terms of biological role, probably plays a role in maintaining homeostasis on mucosal surfaces. The protein is Mucin-17 (MUC17) of Homo sapiens (Human).